We begin with the raw amino-acid sequence, 539 residues long: Probable K(+)/H(+) antiporter subunit D (539 aa).

14 consecutive transmembrane segments (helical) span residues 4–23 (WLDH…AAVL), 36–58 (AIGF…LAAA), 78–100 (FGIV…GLAL), 113–135 (AGHH…FLTG), 140–162 (LFVF…SGPL), 175–197 (LAAS…TLNM), 217–239 (MGSA…SFWL), 251–273 (AGVF…LLVF), 283–305 (FGQE…GVLA), 312–331 (LAGY…VGLG), 335–357 (MLAG…FLLI), 400–422 (VLGL…SGFI), 442–464 (AMSA…AMIA), and 484–506 (VVVI…SLQA).

This sequence belongs to the CPA3 antiporters (TC 2.A.63) subunit D family. May form a hetero-oligomeric complex that consists of six subunits: PhaAB, PhaC, PhaD, PhaE, PhaF and PhaG.

It is found in the cell membrane. Its function is as follows. Part of a K(+) efflux system which is required for the adaptation of R.meliloti to alkaline pH as well as for the infection process during symbiotic nodule development. This is Probable K(+)/H(+) antiporter subunit D (phaD) from Rhizobium meliloti (strain 1021) (Ensifer meliloti).